Reading from the N-terminus, the 481-residue chain is Protein DETOXIFICATION 12 (481 aa).

The next 12 membrane-spanning stretches (helical) occupy residues 38 to 58 (LIFF…LQIV), 76 to 96 (LASS…SCAL), 117 to 137 (YTAM…WFNM), 154 to 174 (AGKY…LQPL), 187 to 207 (LLIT…FLVY), 214 to 234 (LGGA…LGSF), 267 to 287 (AAMI…SGLL), 296 to 316 (VLSV…AIAA), 336 to 356 (IVVY…SMSL), 380 to 400 (MAPL…LSGI), 415 to 435 (LGAF…WIHL), and 438 to 458 (VGLW…LALV).

It belongs to the multi antimicrobial extrusion (MATE) (TC 2.A.66.1) family.

The protein localises to the membrane. In Arabidopsis thaliana (Mouse-ear cress), this protein is Protein DETOXIFICATION 12.